The following is a 188-amino-acid chain: Kappa-casein (188 aa).

Residues 1–21 (MMKSSFLIVPILALTLPFLGA) form the signal peptide. O-linked (GalNAc...) threonine glycosylation is found at Thr-143 and Thr-148. Position 163 is a phosphothreonine (Thr-163). Phosphoserine; alternate is present on Ser-167. Ser-167 carries an O-linked (GalNAc...) serine; alternate glycan. A glycan (O-linked (GalNAc...) threonine) is linked at Thr-184. Ser-185 bears the Phosphoserine mark.

The protein belongs to the kappa-casein family. In terms of tissue distribution, mammary gland specific. Secreted in milk.

It is found in the secreted. Functionally, kappa-casein stabilizes micelle formation, preventing casein precipitation in milk. The chain is Kappa-casein (CSN3) from Sus scrofa (Pig).